The sequence spans 315 residues: Methionyl-tRNA formyltransferase (315 aa).

110–113 (SLLP) serves as a coordination point for (6S)-5,6,7,8-tetrahydrofolate.

The protein belongs to the Fmt family.

The catalysed reaction is L-methionyl-tRNA(fMet) + (6R)-10-formyltetrahydrofolate = N-formyl-L-methionyl-tRNA(fMet) + (6S)-5,6,7,8-tetrahydrofolate + H(+). Attaches a formyl group to the free amino group of methionyl-tRNA(fMet). The formyl group appears to play a dual role in the initiator identity of N-formylmethionyl-tRNA by promoting its recognition by IF2 and preventing the misappropriation of this tRNA by the elongation apparatus. This Mycolicibacterium paratuberculosis (strain ATCC BAA-968 / K-10) (Mycobacterium paratuberculosis) protein is Methionyl-tRNA formyltransferase.